A 517-amino-acid polypeptide reads, in one-letter code: Gamma-1-syntrophin (517 aa).

The region spanning 57 to 140 is the PDZ domain; that stretch reads TVTIRRQTVG…EVTLTVSFLK (84 aa). The PH domain maps to 283 to 390; the sequence is QIVYMGWCEA…WERAFQTATF (108 aa).

It belongs to the syntrophin family. In terms of assembly, interacts with the dystrophin protein DMD and related proteins DTNA and DTNB. Interacts with DGKZ.

The protein resides in the cytoplasm. The protein localises to the cytoskeleton. It is found in the nucleus. In terms of biological role, adapter protein that binds to and probably organizes the subcellular localization of a variety of proteins. May link various receptors to the actin cytoskeleton and the dystrophin glycoprotein complex. May participate in regulating the subcellular location of diacylglycerol kinase-zeta to ensure that diacylglycerol is rapidly inactivated following receptor activation. This Mus musculus (Mouse) protein is Gamma-1-syntrophin (Sntg1).